The chain runs to 515 residues: 2-isopropylmalate synthase (515 aa).

Residues 5–268 (VIIFDTTLRD…VCGIDATQIV (264 aa)) enclose the Pyruvate carboxyltransferase domain. Residues Asp-14, His-202, His-204, and Asn-239 each contribute to the Mn(2+) site. A regulatory domain region spans residues 394 to 515 (KFISLSQHSE…QAKLNAQMTP (122 aa)).

This sequence belongs to the alpha-IPM synthase/homocitrate synthase family. LeuA type 1 subfamily. Homodimer. The cofactor is Mn(2+).

The protein resides in the cytoplasm. The catalysed reaction is 3-methyl-2-oxobutanoate + acetyl-CoA + H2O = (2S)-2-isopropylmalate + CoA + H(+). It participates in amino-acid biosynthesis; L-leucine biosynthesis; L-leucine from 3-methyl-2-oxobutanoate: step 1/4. Its function is as follows. Catalyzes the condensation of the acetyl group of acetyl-CoA with 3-methyl-2-oxobutanoate (2-ketoisovalerate) to form 3-carboxy-3-hydroxy-4-methylpentanoate (2-isopropylmalate). This is 2-isopropylmalate synthase from Polynucleobacter necessarius subsp. necessarius (strain STIR1).